The sequence spans 621 residues: Bifunctional protein GlmU (621 aa).

Residues 1–229 (MAERDLAVAI…AREIVGINDR (229 aa)) are pyrophosphorylase. UDP-N-acetyl-alpha-D-glucosamine-binding positions include 11 to 14 (LAAG), K25, Q76, and 81 to 82 (GT). A Mg(2+)-binding site is contributed by D106. Residues G143, E158, N173, and N227 each coordinate UDP-N-acetyl-alpha-D-glucosamine. N227 contributes to the Mg(2+) binding site. Positions 230 to 250 (RQLAQAYQILQDRLKEAWMEA) are linker. Positions 251–621 (GVTFVDPDSV…TGVGIPSCPP (371 aa)) are N-acetyltransferase. R332 and K350 together coordinate UDP-N-acetyl-alpha-D-glucosamine. Residue H362 is the Proton acceptor of the active site. Residues Y365 and N376 each contribute to the UDP-N-acetyl-alpha-D-glucosamine site. Acetyl-CoA-binding positions include A379, 385–386 (NY), A422, and R441. Positions 601 to 621 (ATPPSPQRADGTGVGIPSCPP) are disordered.

This sequence in the N-terminal section; belongs to the N-acetylglucosamine-1-phosphate uridyltransferase family. The protein in the C-terminal section; belongs to the transferase hexapeptide repeat family. In terms of assembly, homotrimer. Mg(2+) is required as a cofactor.

Its subcellular location is the cytoplasm. The catalysed reaction is alpha-D-glucosamine 1-phosphate + acetyl-CoA = N-acetyl-alpha-D-glucosamine 1-phosphate + CoA + H(+). The enzyme catalyses N-acetyl-alpha-D-glucosamine 1-phosphate + UTP + H(+) = UDP-N-acetyl-alpha-D-glucosamine + diphosphate. Its pathway is nucleotide-sugar biosynthesis; UDP-N-acetyl-alpha-D-glucosamine biosynthesis; N-acetyl-alpha-D-glucosamine 1-phosphate from alpha-D-glucosamine 6-phosphate (route II): step 2/2. It functions in the pathway nucleotide-sugar biosynthesis; UDP-N-acetyl-alpha-D-glucosamine biosynthesis; UDP-N-acetyl-alpha-D-glucosamine from N-acetyl-alpha-D-glucosamine 1-phosphate: step 1/1. It participates in bacterial outer membrane biogenesis; LPS lipid A biosynthesis. Functionally, catalyzes the last two sequential reactions in the de novo biosynthetic pathway for UDP-N-acetylglucosamine (UDP-GlcNAc). The C-terminal domain catalyzes the transfer of acetyl group from acetyl coenzyme A to glucosamine-1-phosphate (GlcN-1-P) to produce N-acetylglucosamine-1-phosphate (GlcNAc-1-P), which is converted into UDP-GlcNAc by the transfer of uridine 5-monophosphate (from uridine 5-triphosphate), a reaction catalyzed by the N-terminal domain. This Synechococcus sp. (strain JA-3-3Ab) (Cyanobacteria bacterium Yellowstone A-Prime) protein is Bifunctional protein GlmU.